The primary structure comprises 192 residues: MLSFLSSNLSNTRQSIAQVLNFALVLSTAFMLWKGLSVVTASSSPIVVVLSGSMEPAFQRGDLLFLWNRSPRAEVGEIVVYNVKGKDIPIVHRVVRTFPEVEGKKEKTVKEVTVSTPTPPNMLLTKGDNNLADDTELYARGQEFLHRKEDIVGSVRGYMPMVGYVTIMLSEHPWLKSVLLGIMGLMVILQRE.

Topologically, residues 1–18 (MLSFLSSNLSNTRQSIAQ) are cytoplasmic. Residues 19–39 (VLNFALVLSTAFMLWKGLSVV) form a helical; Signal-anchor for type II membrane protein membrane-spanning segment. Residues 40–192 (TASSSPIVVV…MGLMVILQRE (153 aa)) are Lumenal-facing. Active-site charge relay system residues include Ser53, His92, and Asp134. Residues 178-189 (VLLGIMGLMVIL) form a C-terminal short (CTS) helix region.

This sequence belongs to the peptidase S26B family. Component of the signal peptidase complex (SPC) composed of a catalytic subunit SEC11 and three accessory subunits SPC1, SPC2 and SPC3. The complex induces a local thinning of the ER membrane which is used to measure the length of the signal peptide (SP) h-region of protein substrates. This ensures the selectivity of the complex towards h-regions shorter than 18-20 amino acids. SPC associates with the translocon complex.

Its subcellular location is the endoplasmic reticulum membrane. The catalysed reaction is Cleavage of hydrophobic, N-terminal signal or leader sequences from secreted and periplasmic proteins.. Functionally, catalytic component of the signal peptidase complex (SPC) which catalyzes the cleavage of N-terminal signal sequences from nascent proteins as they are translocated into the lumen of the endoplasmic reticulum. Specifically cleaves N-terminal signal peptides that contain a hydrophobic alpha-helix (h-region) shorter than 18-20 amino acids. This is Signal peptidase complex catalytic subunit sec11 (sec11) from Emericella nidulans (strain FGSC A4 / ATCC 38163 / CBS 112.46 / NRRL 194 / M139) (Aspergillus nidulans).